A 344-amino-acid polypeptide reads, in one-letter code: Ketol-acid reductoisomerase (NADP(+)) (344 aa).

The region spanning 2-181 (EKIYYDADIS…GAGRAGILTT (180 aa)) is the KARI N-terminal Rossmann domain. NADP(+) is bound by residues 25-28 (YGSQ), arginine 48, serine 52, and 82-85 (DERQ). Residue histidine 107 is part of the active site. Glycine 133 is an NADP(+) binding site. One can recognise a KARI C-terminal knotted domain in the interval 182–327 (TFREETETDL…RKLRSMMPFI (146 aa)). 4 residues coordinate Mg(2+): aspartate 190, glutamate 194, glutamate 226, and glutamate 230. Serine 251 provides a ligand contact to substrate.

This sequence belongs to the ketol-acid reductoisomerase family. Mg(2+) serves as cofactor.

It carries out the reaction (2R)-2,3-dihydroxy-3-methylbutanoate + NADP(+) = (2S)-2-acetolactate + NADPH + H(+). The catalysed reaction is (2R,3R)-2,3-dihydroxy-3-methylpentanoate + NADP(+) = (S)-2-ethyl-2-hydroxy-3-oxobutanoate + NADPH + H(+). It functions in the pathway amino-acid biosynthesis; L-isoleucine biosynthesis; L-isoleucine from 2-oxobutanoate: step 2/4. It participates in amino-acid biosynthesis; L-valine biosynthesis; L-valine from pyruvate: step 2/4. In terms of biological role, involved in the biosynthesis of branched-chain amino acids (BCAA). Catalyzes an alkyl-migration followed by a ketol-acid reduction of (S)-2-acetolactate (S2AL) to yield (R)-2,3-dihydroxy-isovalerate. In the isomerase reaction, S2AL is rearranged via a Mg-dependent methyl migration to produce 3-hydroxy-3-methyl-2-ketobutyrate (HMKB). In the reductase reaction, this 2-ketoacid undergoes a metal-dependent reduction by NADPH to yield (R)-2,3-dihydroxy-isovalerate. The sequence is that of Ketol-acid reductoisomerase (NADP(+)) from Alicyclobacillus acidocaldarius subsp. acidocaldarius (strain ATCC 27009 / DSM 446 / BCRC 14685 / JCM 5260 / KCTC 1825 / NBRC 15652 / NCIMB 11725 / NRRL B-14509 / 104-IA) (Bacillus acidocaldarius).